The sequence spans 178 residues: Oligoribonuclease (178 aa).

Positions 7–168 (LIWIDLEMTG…DDIRESIAEL (162 aa)) constitute an Exonuclease domain. The active site involves tyrosine 128.

It belongs to the oligoribonuclease family.

Its subcellular location is the cytoplasm. Functionally, 3'-to-5' exoribonuclease specific for small oligoribonucleotides. The polypeptide is Oligoribonuclease (Pseudomonas savastanoi pv. phaseolicola (strain 1448A / Race 6) (Pseudomonas syringae pv. phaseolicola (strain 1448A / Race 6))).